The primary structure comprises 754 residues: Phosphoinositide 3-kinase regulatory subunit 6 (754 aa).

Positions 343–363 (ERDLPTGADELPAPGSPEMER) are disordered.

As to quaternary structure, heterodimer of a catalytic subunit (PIK3CG) and a regulatory (PIK3R6) subunit. The binding of PIK3R6 to PIK3CG may exclude the binding of PIK3R5 to PIK3CG. Interacts with beta-gamma G protein dimers. Interacts with PDE3B and RAPGEF3; form a signaling complex that regulates phosphatidylinositol 3-kinase gamma in angiogenesis.

It localises to the cytoplasm. The protein localises to the cell membrane. Its function is as follows. Regulatory subunit of the PI3K gamma complex. Acts as an adapter to drive activation of PIK3CG by beta-gamma G protein dimers. The PIK3CG:PIK3R6 heterodimer is much less sensitive to beta-gamma G protein dimers than PIK3CG:PIK3R5 and its membrane recruitment and beta-gamma G protein dimer-dependent activation requires HRAS bound to PIK3CG. Recruits of the PI3K gamma complex to a PDE3B:RAPGEF3 signaling complex involved in angiogenesis; signaling seems to involve RRAS. This Homo sapiens (Human) protein is Phosphoinositide 3-kinase regulatory subunit 6 (PIK3R6).